Consider the following 351-residue polypeptide: N-formyl peptide receptor 2 (351 aa).

Topologically, residues methionine 1–isoleucine 27 are extracellular. Asparagine 4 carries an N-linked (GlcNAc...) asparagine glycan. A helical transmembrane segment spans residues leucine 28–valine 50. The Cytoplasmic segment spans residues alanine 51 to threonine 61. Residues isoleucine 62–valine 83 traverse the membrane as a helical segment. Topologically, residues serine 84–leucine 100 are extracellular. The cysteines at positions 98 and 176 are disulfide-linked. The helical transmembrane segment at isoleucine 101 to leucine 121 threads the bilayer. At aspartate 122 to serine 140 the chain is on the cytoplasmic side. The helical transmembrane segment at leucine 141–leucine 162 threads the bilayer. Over phenylalanine 163–arginine 205 the chain is Extracellular. Residues phenylalanine 206–alanine 226 form a helical membrane-spanning segment. Over lysine 227–valine 242 the chain is Cytoplasmic. The helical transmembrane segment at leucine 243–valine 266 threads the bilayer. The Extracellular segment spans residues tryptophan 267–proline 286. A helical membrane pass occupies residues threonine 287–glycine 306. The Cytoplasmic segment spans residues glutamine 307 to methionine 351. The segment at leucine 325 to methionine 351 is disordered. Over residues serine 329 to serine 341 the composition is skewed to polar residues.

This sequence belongs to the G-protein coupled receptor 1 family. In terms of assembly, interacts with Amyloid-beta protein 42, product of APP; the interaction takes place at the cell surface and the complex is then rapidly internalized. (Microbial infection) Interacts with Staphylococcus aureus protein SSL13; this interaction leads to the activation of neutrophils. In terms of tissue distribution, detected in lung, bone marrow, neutrophils, spleen and testis.

The protein localises to the cell membrane. Functionally, low affinity receptor for N-formyl-methionyl peptides, which are powerful neutrophil chemotactic factors. Binding of FMLP to the receptor causes activation of neutrophils. This response is mediated via a G-protein that activates a phosphatidylinositol-calcium second messenger system. The activation of LXA4R could result in an anti-inflammatory outcome counteracting the actions of pro-inflammatory signals such as LTB4 (leukotriene B4). Receptor for the chemokine-like protein FAM19A5, mediating FAM19A5-stimulated macrophage chemotaxis and the inhibitory effect on TNFSF11/RANKL-induced osteoclast differentiation. Acts as a receptor for humanin. The sequence is that of N-formyl peptide receptor 2 (FPR2) from Homo sapiens (Human).